The following is a 570-amino-acid chain: Proline--tRNA ligase (570 aa).

This sequence belongs to the class-II aminoacyl-tRNA synthetase family. ProS type 1 subfamily. In terms of assembly, homodimer.

The protein localises to the cytoplasm. It catalyses the reaction tRNA(Pro) + L-proline + ATP = L-prolyl-tRNA(Pro) + AMP + diphosphate. Its function is as follows. Catalyzes the attachment of proline to tRNA(Pro) in a two-step reaction: proline is first activated by ATP to form Pro-AMP and then transferred to the acceptor end of tRNA(Pro). As ProRS can inadvertently accommodate and process non-cognate amino acids such as alanine and cysteine, to avoid such errors it has two additional distinct editing activities against alanine. One activity is designated as 'pretransfer' editing and involves the tRNA(Pro)-independent hydrolysis of activated Ala-AMP. The other activity is designated 'posttransfer' editing and involves deacylation of mischarged Ala-tRNA(Pro). The misacylated Cys-tRNA(Pro) is not edited by ProRS. The protein is Proline--tRNA ligase of Clostridium perfringens (strain ATCC 13124 / DSM 756 / JCM 1290 / NCIMB 6125 / NCTC 8237 / Type A).